Consider the following 208-residue polypeptide: Ras-related protein Rab6 (208 aa).

Position 19 to 27 (19 to 27 (GEQSVGKTS)) interacts with GTP. The short motif at 41–49 (YQATIGIDF) is the Effector region element. GTP contacts are provided by residues 67–71 (DTAGQ), 125–128 (NKTD), and 155–157 (SAK). The interval 176–208 (MDSTENKPSEDMQEVVLKDSPNETKDPEGGCAC) is disordered. Positions 179-208 (TENKPSEDMQEVVLKDSPNETKDPEGGCAC) are enriched in basic and acidic residues.

Belongs to the small GTPase superfamily. Rab family. Interacts with Rich and Act5C. Interacts with BicD (via C-terminal domain). Interacts (in GTP-bound) with GCC1/CG10703 and cbs. Interacts with Gorab (via C-terminus); binds to a Gorab homodimer, this interaction seems to be required for trans-Golgi localization of Gorab. As to expression, expressed in larval eye, wing and leg imaginal disks and in salivary gland. Expressed in the larval optic lobe, showing an enrichment in the neuropil. In the adult brain, expressed in photoreceptors and mushroom body.

The protein resides in the golgi apparatus membrane. The protein localises to the synapse. It localises to the perikaryon. Functionally, protein transport. Regulator of membrane traffic from the Golgi apparatus towards the endoplasmic reticulum (ER). Mediates membrane trafficking during egg chamber growth and organization, possibly upstream of exocyst component Sec5. Also during oogenesis, plays a role, together with BicD but independently of Sec5, in the polarization of the oocyte microtubule cytoskeleton, in the localization of oskar mRNA and in the anterodorsal secretion of grk. Required for anterograde opsin transport through the ER-Golgi complex. Plays a role, together with Rich, in regulating CadN transport in photoreceptor cells which is required for the formation of normal synaptic connections between axons from the inner photoreceptor cells in the eye and postsynaptic cells in the brain medulla layer M6. Necessary for proper development of bristle shafts of macrochaete and microchaete on the head, thorax and scutellum. Modulates Notch signaling. As a key regulator of vesicular traffic, plays a critical role in the regulation of actin organization and is required for normal rates of phagocytic uptake during phagocytosis involved in defense against viral and fungal infection. This is Ras-related protein Rab6 from Drosophila melanogaster (Fruit fly).